Reading from the N-terminus, the 388-residue chain is Succinate--CoA ligase [ADP-forming] subunit beta (388 aa).

Residues 9-244 (KEILRKYNVP…LDEEDANEIE (236 aa)) form the ATP-grasp domain. Residues K46, 53–55 (GRG), E99, A102, and E107 contribute to the ATP site. N199 and D213 together coordinate Mg(2+). Residues N264 and 321 to 323 (GIM) each bind substrate.

Belongs to the succinate/malate CoA ligase beta subunit family. In terms of assembly, heterotetramer of two alpha and two beta subunits. Mg(2+) is required as a cofactor.

The catalysed reaction is succinate + ATP + CoA = succinyl-CoA + ADP + phosphate. It carries out the reaction GTP + succinate + CoA = succinyl-CoA + GDP + phosphate. It participates in carbohydrate metabolism; tricarboxylic acid cycle; succinate from succinyl-CoA (ligase route): step 1/1. In terms of biological role, succinyl-CoA synthetase functions in the citric acid cycle (TCA), coupling the hydrolysis of succinyl-CoA to the synthesis of either ATP or GTP and thus represents the only step of substrate-level phosphorylation in the TCA. The beta subunit provides nucleotide specificity of the enzyme and binds the substrate succinate, while the binding sites for coenzyme A and phosphate are found in the alpha subunit. The polypeptide is Succinate--CoA ligase [ADP-forming] subunit beta (Cupriavidus taiwanensis (strain DSM 17343 / BCRC 17206 / CCUG 44338 / CIP 107171 / LMG 19424 / R1) (Ralstonia taiwanensis (strain LMG 19424))).